The primary structure comprises 258 residues: Imidazole glycerol phosphate synthase subunit HisF (258 aa).

Active-site residues include Asp-11 and Asp-130.

The protein belongs to the HisA/HisF family. As to quaternary structure, heterodimer of HisH and HisF.

The protein resides in the cytoplasm. It catalyses the reaction 5-[(5-phospho-1-deoxy-D-ribulos-1-ylimino)methylamino]-1-(5-phospho-beta-D-ribosyl)imidazole-4-carboxamide + L-glutamine = D-erythro-1-(imidazol-4-yl)glycerol 3-phosphate + 5-amino-1-(5-phospho-beta-D-ribosyl)imidazole-4-carboxamide + L-glutamate + H(+). It participates in amino-acid biosynthesis; L-histidine biosynthesis; L-histidine from 5-phospho-alpha-D-ribose 1-diphosphate: step 5/9. IGPS catalyzes the conversion of PRFAR and glutamine to IGP, AICAR and glutamate. The HisF subunit catalyzes the cyclization activity that produces IGP and AICAR from PRFAR using the ammonia provided by the HisH subunit. The sequence is that of Imidazole glycerol phosphate synthase subunit HisF from Salmonella agona (strain SL483).